The following is a 337-amino-acid chain: Eukaryotic translation initiation factor 3 subunit H (337 aa).

Residues 21–153 (VQCDGLAVMK…LKAYRLTPQA (133 aa)) form the MPN domain.

The protein belongs to the eIF-3 subunit H family. As to quaternary structure, component of the eukaryotic translation initiation factor 3 (eIF-3) complex. The eIF-3 complex interacts with pix. Interacts with mxt.

Its subcellular location is the cytoplasm. Its function is as follows. Component of the eukaryotic translation initiation factor 3 (eIF-3) complex, which is involved in protein synthesis of a specialized repertoire of mRNAs and, together with other initiation factors, stimulates binding of mRNA and methionyl-tRNAi to the 40S ribosome. The eIF-3 complex specifically targets and initiates translation of a subset of mRNAs involved in cell proliferation. The polypeptide is Eukaryotic translation initiation factor 3 subunit H (Drosophila ananassae (Fruit fly)).